A 130-amino-acid polypeptide reads, in one-letter code: Arsenical-resistance protein 2 (130 aa).

The 108-residue stretch at 17 to 124 folds into the Rhodanese domain; it reads QRKDFQVVDL…WETHCRESNL (108 aa).

In terms of biological role, involved in resistance to arsenic compounds. The polypeptide is Arsenical-resistance protein 2 (ARR2) (Saccharomyces cerevisiae (strain ATCC 204508 / S288c) (Baker's yeast)).